The primary structure comprises 512 residues: Alpha-1B-glycoprotein (512 aa).

A signal peptide spans 1-18 (MSLLATVLLLWGFTLGPG). 5 consecutive Ig-like V-type domains span residues 22–126 (MLDS…VTGK), 127–219 (EPLP…MYAS), 220–312 (QAPP…PVEL), 313–415 (MWSD…LRVN), and 416–512 (GPPP…IVEG). 3 N-linked (GlcNAc...) asparagine glycosylation sites follow: N44, N89, and N192. Cystine bridges form between C49–C96, C153–C195, C245–C292, C343–C392, and C441–C488. N-linked (GlcNAc...) asparagine glycans are attached at residues N369, N381, N389, and N485.

As to quaternary structure, interacts with CRISP3. As to expression, expressed in the liver hepatocytes of male and female GH transgenic mice and in the liver of female, but not of male, non-transgenic mice.

It is found in the secreted. This is Alpha-1B-glycoprotein (A1bg) from Mus musculus (Mouse).